The primary structure comprises 303 residues: Polyisoprenyl-teichoic acid--peptidoglycan teichoic acid transferase TagU (303 aa).

The Cytoplasmic segment spans residues 1 to 4; sequence MKKK. A helical; Signal-anchor for type II membrane protein transmembrane segment spans residues 5-25; sequence ILFWVLGILGVLIIGGGIYAY. At 26–303 the chain is on the extracellular side; the sequence is NVYSSVSNTL…KLRSHLEVTK (278 aa).

This sequence belongs to the LytR/CpsA/Psr (LCP) family.

The protein localises to the cell membrane. It functions in the pathway cell wall biogenesis. In terms of biological role, may catalyze the final step in cell wall teichoic acid biosynthesis, the transfer of the anionic cell wall polymers (APs) from their lipid-linked precursor to the cell wall peptidoglycan (PG). This chain is Polyisoprenyl-teichoic acid--peptidoglycan teichoic acid transferase TagU, found in Bacillus cereus (strain AH820).